The chain runs to 72 residues: Translation initiation factor IF-1 (72 aa).

An S1-like domain is found at 1–72 (MAKEEMLEFP…TKGRINYRFK (72 aa)).

Belongs to the IF-1 family. As to quaternary structure, component of the 30S ribosomal translation pre-initiation complex which assembles on the 30S ribosome in the order IF-2 and IF-3, IF-1 and N-formylmethionyl-tRNA(fMet); mRNA recruitment can occur at any time during PIC assembly.

The protein resides in the cytoplasm. One of the essential components for the initiation of protein synthesis. Stabilizes the binding of IF-2 and IF-3 on the 30S subunit to which N-formylmethionyl-tRNA(fMet) subsequently binds. Helps modulate mRNA selection, yielding the 30S pre-initiation complex (PIC). Upon addition of the 50S ribosomal subunit IF-1, IF-2 and IF-3 are released leaving the mature 70S translation initiation complex. In Jannaschia sp. (strain CCS1), this protein is Translation initiation factor IF-1.